Here is a 274-residue protein sequence, read N- to C-terminus: Protein CURLY FLAG LEAF 1 (274 aa).

Residues 17 to 44 (SLNGGGGGGGGRRRGRRAAAAEGSDDSE) form a disordered region. Residues 47-52 (TVELNS) carry the EAR motif. One can recognise a WW domain in the interval 54–88 (VALPYHWEQCLDIRTGQVYYINWEDGTRTTIDPRS). Disordered regions lie at residues 83–133 (TIDP…SGYT) and 175–216 (GRDG…SPTD). Low complexity-rich tracts occupy residues 87–106 (RSSS…SSSR), 121–133 (AAAA…SGYT), and 184–207 (SSSS…AVSS).

As to quaternary structure, binds to HDG1.

Functionally, negatively regulates the cuticle development probably by interacting with the HD-ZIP IV transcription factor HDG1. The polypeptide is Protein CURLY FLAG LEAF 1 (Oryza sativa subsp. japonica (Rice)).